A 265-amino-acid chain; its full sequence is Transcription factor LBX1 (265 aa).

Positions 1-20 (MTSKDEAKSSSVEERRRHAL) are enriched in basic and acidic residues. The interval 1–33 (MTSKDEAKSSSVEERRRHALDLLPPPANSNKPL) is disordered. Residues 125-184 (RRKSRTAFTNHQIYELEKRFLYQKYLSPADRDQIAQQLGLTNAQVITWFQNRRAKLKRDL) constitute a DNA-binding region (homeobox). The disordered stretch occupies residues 212 to 265 (EEETNSVRDDSRSRSPQLGLSGHMPLSPSSPLTEQHTSKECSEDEEDVEIDVDD). The segment covering 253–265 (SEDEEDVEIDVDD) has biased composition (acidic residues).

The protein localises to the nucleus. Transcription factor that controls hypaxial muscle development by down-regulating myod1 and cdkn1b/p27, thereby allowing myoblasts to proliferate before the onset of terminal differentiation. This Xenopus tropicalis (Western clawed frog) protein is Transcription factor LBX1.